The primary structure comprises 723 residues: Polyribonucleotide nucleotidyltransferase (723 aa).

Residues aspartate 497 and aspartate 503 each contribute to the Mg(2+) site. Residues 564 to 623 (PRLLSFRIDPELIGTVIGPGGRTIKGITERTNTKIDIEDGGIVTIASHDGAAAEAAQRII) form the KH domain. Residues 633–701 (GEVFTGTITR…NRGRINLTLR (69 aa)) enclose the S1 motif domain. Residues 701–723 (RGVPQNGEETQSEPAPTPVAPLN) form a disordered region.

Belongs to the polyribonucleotide nucleotidyltransferase family. It depends on Mg(2+) as a cofactor.

It localises to the cytoplasm. It carries out the reaction RNA(n+1) + phosphate = RNA(n) + a ribonucleoside 5'-diphosphate. Involved in mRNA degradation. Catalyzes the phosphorolysis of single-stranded polyribonucleotides processively in the 3'- to 5'-direction. The polypeptide is Polyribonucleotide nucleotidyltransferase (Prochlorococcus marinus (strain MIT 9313)).